Reading from the N-terminus, the 259-residue chain is uncharacterized protein (259 aa).

The signal sequence occupies residues 1–22 (MKHSKKLLLCISFLLITFFISG). Residue Cys23 is the site of N-palmitoyl cysteine attachment. Cys23 carries the S-diacylglycerol cysteine lipid modification.

It belongs to the staphylococcal tandem lipoprotein family.

The protein resides in the cell membrane. This is an uncharacterized protein from Staphylococcus epidermidis (strain ATCC 35984 / DSM 28319 / BCRC 17069 / CCUG 31568 / BM 3577 / RP62A).